Consider the following 220-residue polypeptide: Uracil-DNA glycosylase (220 aa).

Asp-61 functions as the Proton acceptor in the catalytic mechanism.

It belongs to the uracil-DNA glycosylase (UDG) superfamily. UNG family.

Its subcellular location is the cytoplasm. It catalyses the reaction Hydrolyzes single-stranded DNA or mismatched double-stranded DNA and polynucleotides, releasing free uracil.. In terms of biological role, excises uracil residues from the DNA which can arise as a result of misincorporation of dUMP residues by DNA polymerase or due to deamination of cytosine. This is Uracil-DNA glycosylase from Glaesserella parasuis serovar 5 (strain SH0165) (Haemophilus parasuis).